Consider the following 195-residue polypeptide: MAKARRRRVRDTWKEKKWYVIKSPKLFGENEIGTTPSRDPDFLLKRRVEATMRELTGDFSKQYVKLKFQIDSVAGSEATTRFIGHQVTTDYVRSMIRRGTSRVDAPVIVETKDGYKLKVHPLAITIRRAKSSQQKYMRQSIEEHLREIASEKTFEELVEGIVTGKIASEIYHQAKKIYPLKRVEIIKSRVLEEPA.

The protein belongs to the eukaryotic ribosomal protein eS1 family.

This chain is Small ribosomal subunit protein eS1, found in Methanothermobacter thermautotrophicus (strain ATCC 29096 / DSM 1053 / JCM 10044 / NBRC 100330 / Delta H) (Methanobacterium thermoautotrophicum).